Here is an 89-residue protein sequence, read N- to C-terminus: Small ribosomal subunit protein uS15 (89 aa).

It belongs to the universal ribosomal protein uS15 family. Part of the 30S ribosomal subunit. Forms a bridge to the 50S subunit in the 70S ribosome, contacting the 23S rRNA.

One of the primary rRNA binding proteins, it binds directly to 16S rRNA where it helps nucleate assembly of the platform of the 30S subunit by binding and bridging several RNA helices of the 16S rRNA. Functionally, forms an intersubunit bridge (bridge B4) with the 23S rRNA of the 50S subunit in the ribosome. This chain is Small ribosomal subunit protein uS15, found in Shewanella denitrificans (strain OS217 / ATCC BAA-1090 / DSM 15013).